We begin with the raw amino-acid sequence, 29 residues long: Augerpeptide hheTx2 (29 aa).

Contains 4 disulfide bonds. Expressed by the venom duct.

It localises to the secreted. The sequence is that of Augerpeptide hheTx2 from Hastula hectica (Sea snail).